We begin with the raw amino-acid sequence, 532 residues long: L-proline--[L-prolyl-carrier protein] ligase (532 aa).

The tract at residues 510–532 (KTDYRRLGLDAPPRPAAPLGTAR) is disordered.

This sequence belongs to the ATP-dependent AMP-binding enzyme family.

It catalyses the reaction holo-[peptidyl-carrier protein] + L-proline + ATP = L-prolyl-[peptidyl-carrier protein] + AMP + diphosphate. Involved in the biosynthesis of undecylprodigiosin. Catalyzes the conversion of L-proline to L-prolyl-AMP and the transfer of the L-prolyl group to acyl carrier protein RedO. This chain is L-proline--[L-prolyl-carrier protein] ligase, found in Streptomyces coelicolor (strain ATCC BAA-471 / A3(2) / M145).